Reading from the N-terminus, the 392-residue chain is tRNA-specific 2-thiouridylase MnmA (392 aa).

ATP contacts are provided by residues 18–25 (AMSGGVDS) and Leu44. Catalysis depends on Cys112, which acts as the Nucleophile. A disulfide bridge connects residues Cys112 and Cys208. An ATP-binding site is contributed by Gly136. The interval 158 to 160 (RDQ) is interaction with tRNA. The active-site Cysteine persulfide intermediate is Cys208.

It belongs to the MnmA/TRMU family.

The protein resides in the cytoplasm. It catalyses the reaction S-sulfanyl-L-cysteinyl-[protein] + uridine(34) in tRNA + AH2 + ATP = 2-thiouridine(34) in tRNA + L-cysteinyl-[protein] + A + AMP + diphosphate + H(+). Catalyzes the 2-thiolation of uridine at the wobble position (U34) of tRNA, leading to the formation of s(2)U34. The sequence is that of tRNA-specific 2-thiouridylase MnmA from Rhodospirillum centenum (strain ATCC 51521 / SW).